Reading from the N-terminus, the 321-residue chain is Collectin-43 (321 aa).

Residues 1-20 form the signal peptide; the sequence is MLPLPLSILLLLTQSQSFLG. Residues 43–163 form a disordered region; it reads PADSLRGHDG…GEKGARGETS (121 aa). A compositionally biased stretch (basic and acidic residues) spans 47–65; the sequence is LRGHDGRDGKEGPQGEKGD. Positions 49 to 162 constitute a Collagen-like domain; the sequence is GHDGRDGKEG…PGEKGARGET (114 aa). Gly residues-rich tracts occupy residues 100-109 and 124-133; these read GPEGGVGAPG and GTPGPGGAIG. Residues 147 to 159 are compositionally biased toward basic and acidic residues; sequence KGDRGDPGEKGAR. The C-type lectin domain occupies 222-321; the sequence is QLCREAKGQL…REERLVICEF (100 aa). Cystine bridges form between C224/C319 and C297/C311.

Belongs to the SFTPD family. In terms of assembly, oligomeric complex of 4 set of homotrimers. In terms of processing, hydroxylated. Liver specific.

The protein resides in the secreted. Lectin that binds to various sugars: mannose = ManNAc &gt; fucose &gt; GlcNAc &gt; glucose = maltose &gt; galactose &gt; lactose &gt; GalNAc. Could play a role in immune defense. The chain is Collectin-43 (CL43) from Bos taurus (Bovine).